The chain runs to 326 residues: Zinc transporter 11 (326 aa).

The N-terminal stretch at 1–20 is a signal peptide; that stretch reads MSRSLVFFFLFLVLVVPCLS. Residues 21-49 lie on the Extracellular side of the membrane; that stretch reads HGTGGDHDDDEASHVKSSDLKSKSLISVK. A helical membrane pass occupies residues 50–70; that stretch reads IACLVIIFVLTFISGVSPYFL. Residues 71–75 are Cytoplasmic-facing; it reads KWSQG. The chain crosses the membrane as a helical span at residues 76-96; that stretch reads FLVLGTQFAGGVFLATALMHF. Over 97-121 the chain is Extracellular; it reads LSDADETFRGLLTAEGESEPSPAYP. Residues 122-142 traverse the membrane as a helical segment; that stretch reads FAYMLACAGFMLTMLADSVIA. The Cytoplasmic portion of the chain corresponds to 143 to 174; sequence HIYSKTQNDLELQGEDKSNQRSATTETSIGDS. Residues 175–195 form a helical membrane-spanning segment; that stretch reads ILLIVALCFHSVFEGIAIGIS. The Extracellular portion of the chain corresponds to 196 to 203; that stretch reads ETKSDAWR. A helical transmembrane segment spans residues 204–224; sequence ALWTITLHKIFAAIAMGIALL. Over 225–235 the chain is Cytoplasmic; that stretch reads RMIPDRPLFSS. The helical transmembrane segment at 236–256 threads the bilayer; it reads ITYSFAFAISSPIGVAIGIVI. The Extracellular portion of the chain corresponds to 257 to 262; the sequence is DATTQG. Residues 263–283 traverse the membrane as a helical segment; it reads SIADWIFALSMSLACGVFVYV. Topologically, residues 284–305 are cytoplasmic; it reads SVNHLLAKGYRPNKKVHVDEPR. A helical transmembrane segment spans residues 306-326; sequence YKFLAVLFGVVVIAIVMIWDT.

The protein belongs to the ZIP transporter (TC 2.A.5) family.

The protein resides in the cell membrane. In terms of biological role, probably mediates zinc uptake from the rhizosphere. This chain is Zinc transporter 11 (ZIP11), found in Arabidopsis thaliana (Mouse-ear cress).